The following is a 357-amino-acid chain: Arginine kinase (357 aa).

A2 is modified (N-acetylalanine). The region spanning 9 to 91 (KLEEGFKKLE…FDPIIEDYHK (83 aa)) is the Phosphagen kinase N-terminal domain. Residue 64-68 (GVGVY) coordinates L-arginine. The region spanning 119–356 (FVISTRVRCG…LELIKIEKEM (238 aa)) is the Phosphagen kinase C-terminal domain. ATP is bound by residues 122–126 (STRVR) and H185. Residue E225 participates in L-arginine binding. ATP is bound at residue R229. L-arginine is bound at residue C271. Residues 280 to 284 (RASVH) and 309 to 314 (RGTRGE) contribute to the ATP site. E314 is a binding site for L-arginine.

It belongs to the ATP:guanido phosphotransferase family.

It carries out the reaction L-arginine + ATP = N(omega)-phospho-L-arginine + ADP + H(+). The sequence is that of Arginine kinase from Carcinus maenas (Common shore crab).